A 268-amino-acid polypeptide reads, in one-letter code: Phosphatidylcholine synthase (268 aa).

Topologically, residues 1–27 are cytoplasmic; sequence MAARKAAKKLTDRIPRPKKKVTWPQAR. The chain crosses the membrane as a helical span at residues 28 to 48; it reads AFSVHLLTASGSFLAFLSLVA. The Periplasmic portion of the chain corresponds to 49–53; sequence ASEER. A helical membrane pass occupies residues 54–74; the sequence is WTAMFWWLGLALFVDGIDGPI. The Cytoplasmic portion of the chain corresponds to 75-88; the sequence is ARKLEVKEILPTWS. A helical membrane pass occupies residues 89 to 109; that stretch reads GELLDNIIDYVTYVLIPAFAL. The Periplasmic segment spans residues 110 to 112; the sequence is YQR. Residues 113–133 traverse the membrane as a helical segment; the sequence is GFMGEGLSFLSAAIIVVSSAI. Residues 134–145 are Cytoplasmic-facing; it reads YYADTGMKTKEN. The chain crosses the membrane as a helical span at residues 146 to 166; that stretch reads FFKGFPVVWNMVVFTLFVIEP. At 167-168 the chain is on the periplasmic side; the sequence is GQ. Residues 169–189 traverse the membrane as a helical segment; that stretch reads WVSFAVVVVAGILTFVPINFI. The Cytoplasmic segment spans residues 190–203; it reads HPVRVVRLRPFNLT. A helical transmembrane segment spans residues 204-224; sequence MTLLWCAFGALALAQAALAAF. Topologically, residues 225–240 are periplasmic; the sequence is YDQIGVLGAQVSTFIK. Residues 241-261 traverse the membrane as a helical segment; sequence IGITITGLYLACIGGIMQFFP. At 262 to 268 the chain is on the cytoplasmic side; it reads NLGAKKA.

The protein belongs to the CDP-alcohol phosphatidyltransferase class-I family. Requires Mn(2+) as cofactor.

It localises to the cell inner membrane. The catalysed reaction is a CDP-1,2-diacyl-sn-glycerol + choline = a 1,2-diacyl-sn-glycero-3-phosphocholine + CMP + H(+). Its function is as follows. Condenses choline with CDP-diglyceride to produce phosphatidylcholine and CMP. This Mesorhizobium japonicum (strain LMG 29417 / CECT 9101 / MAFF 303099) (Mesorhizobium loti (strain MAFF 303099)) protein is Phosphatidylcholine synthase (pcs).